A 357-amino-acid polypeptide reads, in one-letter code: Elongation factor Ts (357 aa).

The involved in Mg(2+) ion dislocation from EF-Tu stretch occupies residues 82–85 (TDFV).

The protein belongs to the EF-Ts family.

The protein localises to the cytoplasm. In terms of biological role, associates with the EF-Tu.GDP complex and induces the exchange of GDP to GTP. It remains bound to the aminoacyl-tRNA.EF-Tu.GTP complex up to the GTP hydrolysis stage on the ribosome. This Campylobacter jejuni subsp. doylei (strain ATCC BAA-1458 / RM4099 / 269.97) protein is Elongation factor Ts.